The primary structure comprises 889 residues: F-BAR domain only protein 1 (889 aa).

Residues 1 to 248 (MSYFGEHFWG…NIENVSVEML (248 aa)) enclose the F-BAR domain. A mediates membrane-binding region spans residues 1 to 275 (MSYFGEHFWG…LDFEAYSAAA (275 aa)). Residues 156–195 (TSQKEMDKAETKTKKAAESLRRSVEKYNSARADFEQKMLD) are a coiled coil. The interval 267–442 (DFEAYSAAAL…KNLFGPPLES (176 aa)) is mediates interaction with the adaptor protein complex AP-2. The disordered stretch occupies residues 294-352 (LSRREREPEPPAAVDFLEPDSGTCPEVDEEGFTVRPDVTQNSTAEPSRFSSSDSDFDDE). Residues S295, S347, and S372 each carry the phosphoserine modification. Residues 382–596 (ATAGSLILPP…SPLGSSAAST (215 aa)) form a disordered region. A compositionally biased stretch (low complexity) spans 450–469 (TGSSSLGFTSSPSPFSSSSP). Positions 496 to 511 (PGTPQSPPSCRAPPPE) are enriched in pro residues. Phosphoserine is present on S530. Residues 580–596 (LSRSLSPSPLGSSAAST) show a composition bias toward low complexity. The interval 609-889 (HGVSRGPSPV…FATGMYLVSC (281 aa)) is mediates interaction with AGFG1, CALM, DAB2, EPS15, EPS15R, ITSN1 and clathrin. Residue S616 is modified to Phosphoserine. Residues 625-888 (ALPIATAFTE…RFATGMYLVS (264 aa)) enclose the MHD domain. The disordered stretch occupies residues 826–849 (AGGSGRLSASWEPLSGPSTPSPVA).

The protein belongs to the FCHO family. May oligomerize and form homotetramer. Interacts with AP2A2 and AP2B1; 2 subunits of the adaptor protein complex AP-2. Interacts with DAB2. Interacts with clathrin (CLTC or CLTCL1). Interacts with EPS15, EPS15R and ITSN1. Interacts with AGFG1 and CALM. May interact with ACVR1; linking this receptor to clathrin-mediated endocytosis. In terms of tissue distribution, predominantly expressed in lymphoid cells.

It is found in the membrane. The protein resides in the clathrin-coated pit. Its function is as follows. Functions in an early step of clathrin-mediated endocytosis. Has both a membrane binding/bending activity and the ability to recruit proteins essential to the formation of functional clathrin-coated pits. May regulate Bmp signaling by regulating clathrin-mediated endocytosis of Bmp receptors. Involved in the regulation of T-cell poliferation and activation. Affects TCR clustering upon receptor triggering and modulates its internalisation, playing a role in TCR-dependent T-cell activation. This Homo sapiens (Human) protein is F-BAR domain only protein 1.